Reading from the N-terminus, the 130-residue chain is MYRAVTRGIEVSVEPFYLEDQSEPEENRYVWGYRITIANNSTETVQLRSRYWQITDANGYVEEVRGPGVVGEQPTLEPGDSFQYSSGCPLTTTSGVMVGRYQMQGNGGSLFEVDIPAFSLDIPEQRRTLN.

One can recognise an ApaG domain in the interval 3-127 (RAVTRGIEVS…FSLDIPEQRR (125 aa)).

The chain is Protein ApaG from Brucella anthropi (strain ATCC 49188 / DSM 6882 / CCUG 24695 / JCM 21032 / LMG 3331 / NBRC 15819 / NCTC 12168 / Alc 37) (Ochrobactrum anthropi).